We begin with the raw amino-acid sequence, 130 residues long: Large ribosomal subunit protein bL17 (130 aa).

The protein belongs to the bacterial ribosomal protein bL17 family. As to quaternary structure, part of the 50S ribosomal subunit. Contacts protein L32.

The chain is Large ribosomal subunit protein bL17 from Nitrosomonas eutropha (strain DSM 101675 / C91 / Nm57).